A 178-amino-acid polypeptide reads, in one-letter code: Cytochrome b6-f complex iron-sulfur subunit 2 (178 aa).

A helical membrane pass occupies residues 17-36; that stretch reads LLNFFTGAIVAATASAAIYP. The Rieske domain maps to 61–161; that stretch reads GHPIPASQIL…VQVKDDYIWI (101 aa). [2Fe-2S] cluster-binding residues include Cys107, His109, Cys125, and His128. The cysteines at positions 112 and 127 are disulfide-linked.

It belongs to the Rieske iron-sulfur protein family. The 4 large subunits of the cytochrome b6-f complex are cytochrome b6, subunit IV (17 kDa polypeptide, PetD), cytochrome f and the Rieske protein, while the 4 small subunits are PetG, PetL, PetM and PetN. The complex functions as a dimer. It depends on [2Fe-2S] cluster as a cofactor.

The protein resides in the cellular thylakoid membrane. The catalysed reaction is 2 oxidized [plastocyanin] + a plastoquinol + 2 H(+)(in) = 2 reduced [plastocyanin] + a plastoquinone + 4 H(+)(out). Component of the cytochrome b6-f complex, which mediates electron transfer between photosystem II (PSII) and photosystem I (PSI), cyclic electron flow around PSI, and state transitions. The polypeptide is Cytochrome b6-f complex iron-sulfur subunit 2 (Trichormus variabilis (strain ATCC 29413 / PCC 7937) (Anabaena variabilis)).